The chain runs to 1275 residues: Streptococcal hemoprotein receptor (1275 aa).

A signal peptide spans 1–26 (MKKISKCAFVAISALVLIQATQTVKS). Residues 61 to 123 (GKEYYKHIEK…KKDGDILITF (63 aa)) are HID 1. Positions 87, 196, 197, and 238 each coordinate heme. The HID 2 stretch occupies residues 203–269 (IKALTQQITK…KGFEDVTITV (67 aa)). Residues 369–501 (LTEGTYTLNF…DMTFSKTVTK (133 aa)) form the NEAT 1 domain. LRR repeat units lie at residues 544 to 567 (LEQIRGELRLDHYELTDISLLKHA), 568 to 590 (KNITELHLDGNQITEIPKELFSQ), 592 to 614 (KQLRFLNLRSNHLTYLDKDTFKS), 616 to 638 (AQLRELYLSSNFIHSLEGGLFQS), 639 to 662 (LHHLEQLDLSKNRIGRLCDNPFEG), 664 to 686 (SRLTSLGFAENSLEEIPEKALEP), 687 to 710 (LTSLNFIDLSQNNLALLPKTIEKL), 712 to 733 (ALSTIVASRNHITRIDNISFKN), 734 to 757 (LPKLSVLDLSTNEISNLPNGIFKQ), 759 to 781 (NQLTKLDFFNNLLTQVEESVFPD), and 783 to 804 (ETLNLDVKFNQIKSVSPKVRAL). In terms of domain architecture, NEAT 2 spans 976-1138 (LRDGIYYLNA…TTEKAKVVKE (163 aa)). Disordered stretches follow at residues 1137 to 1174 (KETNNPQENSHLTSTDQLKGPQNRQQEKTPTSPPSAAT), 1186 to 1205 (KATGQSTQETSKTDDTDKAE), and 1210 to 1248 (LVRDHQTSIEGKTAKDTKTKKSDKKHRSNQQSNGEESSS). The span at 1138–1166 (ETNNPQENSHLTSTDQLKGPQNRQQEKTP) shows a compositional bias: polar residues. Basic and acidic residues-rich tracts occupy residues 1196-1205 (SKTDDTDKAE) and 1210-1229 (LVRDHQTSIEGKTAKDTKTK). The helical transmembrane segment at 1250-1269 (YHLIAGLSSFMIVALGFIIG) threads the bilayer.

The protein resides in the cell membrane. May modulate heme uptake according to heme availability. In the presence of high heme concentrations, NEAT 1 facilitates fast heme delivery to Shp, whereas NEAT 2 serves as a temporary storage for heme on the bacterial surface. When heme availability is limiting, heme from NEAT 2 is transferred back to NEAT 1 and from there to Shp. Hemoprotein receptor that plays a central role in the acquisition of host heme, a source of iron during bacterial infection, and is therefore an important virulence factor. Captures host hemoproteins and their iron-containing heme molecules, and transfers the heme to the cell surface heme-binding protein Shp. Plays a pivotal role in iron acquisition and growth under iron-starvation conditions. Uses a cap and release mechanism in which Shr forms a dynamic complex with hemoglobin that enables the gated release of its most labile heme molecule. This mechanism exploits the hemoglobin beta subunit's inherent weaker affinity for heme, allowing S.pyogenes to preferentially capture only heme-saturated forms of hemoglobin that contain iron. In vitro, binds directly to a variety of heme-containing proteins, including hemoglobin, myoglobin, heme albumin and the hemoglobin-haptoglobin complex. It also binds to and acquires heme from methemoglobin, the ferric form of hemoglobin, which is likely to be a physiologically relevant heme source for the hemolytic group A streptococcus (GAS). Seems to have an inherent ability to reduce the ferric heme present in methemoglobin to ferrous heme and to provide a stable environment for the produced ferrous complex. Does not bind apohemoglobin, apohaptoglobin, fibrinogen or streptavidin, indicating that it specifically recognizes hemoproteins. Functionally, in addition to its role in heme acquisition, functions as an adhesin, contributing to host cell adhesion and hence virulence. Specifically binds to extracellular matrix (ECM) components, including fibronectin and laminin, and mediates bacterial attachment to host epithelial cells. This Streptococcus pyogenes serotype M1 protein is Streptococcal hemoprotein receptor.